Reading from the N-terminus, the 1053-residue chain is DNA-directed RNA polymerase subunit beta' (1053 aa).

Residues Cys-60, Cys-62, Cys-75, and Cys-78 each coordinate Zn(2+). Mg(2+) is bound by residues Asp-449, Asp-451, and Asp-453.

Belongs to the RNA polymerase beta' chain family. In terms of assembly, the RNAP catalytic core consists of 2 alpha, 1 beta, 1 beta' and 1 omega subunit. When a sigma factor is associated with the core the holoenzyme is formed, which can initiate transcription. The cofactor is Mg(2+). Zn(2+) is required as a cofactor.

The catalysed reaction is RNA(n) + a ribonucleoside 5'-triphosphate = RNA(n+1) + diphosphate. Its function is as follows. DNA-dependent RNA polymerase catalyzes the transcription of DNA into RNA using the four ribonucleoside triphosphates as substrates. This chain is DNA-directed RNA polymerase subunit beta', found in Brochothrix thermosphacta (Microbacterium thermosphactum).